Reading from the N-terminus, the 365-residue chain is SWR1 complex subunit 2 (365 aa).

2 disordered regions span residues 43–83 (ALKE…NEKE) and 95–147 (PGKT…EGEK). Acidic residues predominate over residues 48-74 (EHDDEYEAEREVADEFDSDFNDDEPEP). The span at 99 to 108 (ASKKKKKKTK) shows a compositional bias: basic residues. Residues 118-132 (GDEKPGEELGNKEQE) show a composition bias toward basic and acidic residues. 2 coiled-coil regions span residues 123–150 (GEEL…KVIR) and 184–225 (GEEK…KAIV). A compositionally biased stretch (acidic residues) spans 133–144 (EKEENEAQEDME). The segment at 333–365 (RTKIPKSNKSFSLRSSARFLSSESEEESEEDSD) is disordered. Low complexity predominate over residues 342 to 354 (SFSLRSSARFLSS). The segment covering 355–365 (ESEEESEEDSD) has biased composition (acidic residues).

It belongs to the VPS72/YL1 family. As to quaternary structure, component of the SWR1 chromatin-remodeling complex composed of at least ARP6/ESD1/SUF3, PIE1, SWC6, SWC2 and H2AZs (HTA8, HTA9, HTA11). Interacts directly with SWC6 and H2AZs, but not with ARP6.

In terms of biological role, component of the SWR1 complex which mediates the ATP-dependent exchange of histone H2A for the H2A variant H2A.F/Z leading to transcriptional regulation of selected genes (e.g. FLC) by chromatin remodeling. In Arabidopsis thaliana (Mouse-ear cress), this protein is SWR1 complex subunit 2 (SWC2).